The primary structure comprises 348 residues: EGF-like domain-containing protein 1 (348 aa).

The N-terminal stretch at 1–19 (MFYLSTFMTIVISLSLVSC) is a signal peptide. Residues 60-92 (TGSNCTVTCQNNGKCYDGSKCLCSSDYTGDLCE) form the EGF-like domain. Cystine bridges form between cysteine 64-cysteine 74, cysteine 68-cysteine 80, and cysteine 82-cysteine 91. A ZP domain is found at 99–342 (RCTLDAVVFE…PTCAAPXVGQ (244 aa)).

In terms of tissue distribution, prismatic layer of shell (at protein level). Expressed primarily in the mantle with highest level in the mantle edge and lower level in the mantle pallium.

The protein localises to the secreted. This chain is EGF-like domain-containing protein 1, found in Pinctada maxima (Silver-lipped pearl oyster).